We begin with the raw amino-acid sequence, 68 residues long: MLKSFCILSVFMVLFLAKFPDLCSGEEISPLKIVVRNSEYLNNPCNGVTCPSGYRCSIVDKQCIKKEK.

The first 25 residues, 1 to 25, serve as a signal peptide directing secretion; it reads MLKSFCILSVFMVLFLAKFPDLCSG. The propeptide occupies 26–36; sequence EEISPLKIVVR. 2 disulfide bridges follow: Cys-45–Cys-56 and Cys-50–Cys-63. The interval 55–67 is highly charged C-terminal region, binds to TRPV1 channel; the sequence is RCSIVDKQCIKKE.

This sequence belongs to the scoloptoxin-04 family. In terms of tissue distribution, expressed by the venom gland.

Its subcellular location is the secreted. Functionally, extremely potent agonist and potentiator of TRPV1 (EC(50)=470-521.5 nM (mouse)). It strongly promotes the heat activation process by downshifting the activation threshold temperature. It preferably binds to the activated channel and promotes its opening. Holding the channel closed by cooling prevents binding of this toxin, leaving it ineffective. The toxin binds to the charge-rich outer pore region of the channel where it directly interacts with the pore helix and turret, two adjacent structural elements known to be critical for activation gating of TRPV1. In comparison with Sm1b, induces a TRPV1 desensitization with slower kinetics (20 seconds). In vivo, induces pain in mice after intraplantar injection. Its function is as follows. Potent agonist and probable potentiator of TRPV1 (EC(50)=38.35 uM (mouse)). Also binds to the outer pore region of TRPV1. In comparison with Sm1a, induces a TRPV1 desensitization with faster kinetics (2 seconds) and leads to a more complete TRPV1 desensitization. Desensitization is achieved by reducing both the open probability and the single-channel conductance upon prolonged exposure. This Scolopendra mutilans (Chinese red-headed centipede) protein is Tau-scoloptoxin(04)-Ssm1b.